The following is a 129-amino-acid chain: MAEFTVAVSDPEDGHTYQIDVDGQDANRFIGRELGDEVDGGAVGLDGYSLELTGGSDTSGRPMRPDVRGVTTKEIMSDGGVGFEPTTDGERKRITVRGREVSDDTRQINAKITARGSDDVADLLGDDDE.

The tract at residues 53–88 (TGGSDTSGRPMRPDVRGVTTKEIMSDGGVGFEPTTD) is disordered.

This sequence belongs to the eukaryotic ribosomal protein eS6 family.

This is Small ribosomal subunit protein eS6 (rps6e) from Haloarcula marismortui (strain ATCC 43049 / DSM 3752 / JCM 8966 / VKM B-1809) (Halobacterium marismortui).